A 206-amino-acid polypeptide reads, in one-letter code: Large ribosomal subunit protein uL4 (206 aa).

This sequence belongs to the universal ribosomal protein uL4 family. Part of the 50S ribosomal subunit.

In terms of biological role, one of the primary rRNA binding proteins, this protein initially binds near the 5'-end of the 23S rRNA. It is important during the early stages of 50S assembly. It makes multiple contacts with different domains of the 23S rRNA in the assembled 50S subunit and ribosome. Forms part of the polypeptide exit tunnel. This Cereibacter sphaeroides (strain ATCC 17025 / ATH 2.4.3) (Rhodobacter sphaeroides) protein is Large ribosomal subunit protein uL4.